The following is a 345-amino-acid chain: WD40 repeat protein poxJ (345 aa).

WD repeat units lie at residues 15–49 (ANPPSDSISELSWSPVANHLAMSSWDQTVRIYDVS), 59–100 (LFNF…EAQQ), 101–146 (VAAH…PLAT), and 250–284 (VNDVSFHPKYYTFSTAGADGTFAFWDKDAHHRLKS).

It belongs to the WD repeat rae1 family.

The protein operates within secondary metabolite biosynthesis. WD40 repeat protein; part of the gene cluster that mediates the biosynthesis of oxaleimides, cytotoxic compounds containing an unusual disubstituted succinimide moiety. The first step of the pathway is provided by the HR-PKS poxF that serves in a new mode of collaborative biosynthesis with the PKS-NRPS poxE, by providing the olefin containing amino acid substrate via the synthesis of an ACP-bound dec-4-enoate. The cytochrome P450 monooxygenase poxM-catalyzed oxidation at the alpha-position creates the enzyme-bound 2-hydroxydec-4-enoyl-ACP thioester, which may be prone to spontaneous hydrolysis to yield 2-hydroxydec-4-enoic acid due to increased electrophilicity of the carbonyl. 2-hydroxydec-4-enoic acid can then be further oxidized by poxM to yield the alpha-ketoacid 2-oxodec-4-enoicacid, which is reductively aminated by the aminotransferase poxL to yield (S,E)-2-aminodec-4-enoic acid. The Hybrid PKS-NRPS synthetase poxE then performs condensation between the octaketide product of its PKS modules and the amino group of (S,E)-2-aminodec-4-enoic acid which is activated and incorporated by the adenylation domain. The resulting aminoacyl product can be cyclized by the Diels-Alderase PoxQ and reductively released by the reductive (R) domain of poxE to yield an aldehyde intermediate. The released aldehyde is then substrate for a Knoevenagel condensation by the hydrolyase poxO followed by an oxidation at the 5-position of the pyrrolidone ring. The presence of the olefin from the amino acid building block allows for migration of the substituted allyl group to occur. This allylic transposition reaction takes place in a conjugate addition, semipinacol-like fashion to yield a succinimide intermediate. Iterative two-electron oxidations of the C7 methyl of the succinimide intermediate to the carboxylic acid can be catalyzed by one of two remaining cytochrome P450 monooxygenasess poxC or poxD to yield oxaleimide A. Subsequent oxidation yields the maleimide scaffold oxaleimide I. Both oxaleimide A and oxaleimide I can undergo oxidative modifications in the decalin ring to yield the series of products oxaleimides B to H. In Penicillium oxalicum (strain 114-2 / CGMCC 5302) (Penicillium decumbens), this protein is WD40 repeat protein poxJ.